Consider the following 262-residue polypeptide: uncharacterized protein (262 aa).

6 helical membrane passes run 21–41, 94–114, 139–159, 164–184, 205–225, and 240–260; these read ILITYFLCWAGFLFSFSVGKF, IVSNFMGCLIIMFALGALAYL, LLILFIFTVINPLTGLIGVNL, LIAVLPHGFFEFFGFATAVVV, IVILIACSFIFIFIAGMLEPI, and LLAAFATGYKNLFLYLISMLF.

It is found in the cell membrane. This is an uncharacterized protein from Methanocaldococcus jannaschii (strain ATCC 43067 / DSM 2661 / JAL-1 / JCM 10045 / NBRC 100440) (Methanococcus jannaschii).